A 572-amino-acid chain; its full sequence is Bilirubin oxidase (572 aa).

The signal sequence occupies residues 1–19 (MFKHTLGAAALSLLFNSNA). Positions 20–38 (VQASPVPETSPATGHLFKR) are excised as a propeptide. Plastocyanin-like domains follow at residues 98–194 (VGYD…YMLT) and 404–526 (VAFA…VFVD). Residues His132, His134, His172, His174, His436, His439, His441, His494, Cys495, His496, His500, and Met505 each contribute to the Cu cation site. 2 N-linked (GlcNAc...) asparagine glycosylation sites follow: Asn510 and Asn520.

It belongs to the multicopper oxidase family. Cu cation serves as cofactor.

The catalysed reaction is 2 (4Z,15Z)-bilirubin IXalpha + O2 = 2 biliverdin IXalpha + 2 H2O. In terms of biological role, oxidation of bilirubin and other tetrapyrroles. This chain is Bilirubin oxidase, found in Albifimbria verrucaria (Myrothecium leaf spot and pod blight fungus).